The sequence spans 407 residues: Cell division protein FtsZ (407 aa).

Residues 18–22 (GGGVN), 105–107 (GTG), Glu-136, Arg-140, and Asp-184 each bind GTP. The interval 312–407 (FDGGQPPARR…EELDVPDFLK (96 aa)) is disordered. 2 stretches are compositionally biased toward low complexity: residues 336 to 348 (AAPA…STRP) and 368 to 377 (APATASGESS). Over residues 381–390 (VSPPHVPPAR) the composition is skewed to pro residues. Residues 396–407 (QAEELDVPDFLK) are compositionally biased toward acidic residues.

It belongs to the FtsZ family. Homodimer. Polymerizes to form a dynamic ring structure in a strictly GTP-dependent manner. Interacts directly with several other division proteins.

Its subcellular location is the cytoplasm. Essential cell division protein that forms a contractile ring structure (Z ring) at the future cell division site. The regulation of the ring assembly controls the timing and the location of cell division. One of the functions of the FtsZ ring is to recruit other cell division proteins to the septum to produce a new cell wall between the dividing cells. Binds GTP and shows GTPase activity. This is Cell division protein FtsZ from Streptomyces griseus.